A 374-amino-acid chain; its full sequence is Ribosomal RNA large subunit methyltransferase M (374 aa).

S-adenosyl-L-methionine-binding positions include serine 188, 221 to 224 (CPGG), aspartate 240, aspartate 260, and aspartate 276. The Proton acceptor role is filled by lysine 305.

Belongs to the class I-like SAM-binding methyltransferase superfamily. RNA methyltransferase RlmE family. RlmM subfamily. In terms of assembly, monomer.

It is found in the cytoplasm. The enzyme catalyses cytidine(2498) in 23S rRNA + S-adenosyl-L-methionine = 2'-O-methylcytidine(2498) in 23S rRNA + S-adenosyl-L-homocysteine + H(+). Functionally, catalyzes the 2'-O-methylation at nucleotide C2498 in 23S rRNA. This chain is Ribosomal RNA large subunit methyltransferase M, found in Edwardsiella ictaluri (strain 93-146).